We begin with the raw amino-acid sequence, 65 residues long: Hainantoxin-X-3 (65 aa).

The signal sequence occupies residues 1–20; that stretch reads MNMKILVLVAVLCLVVSTHA. Positions 21–37 are excised as a propeptide; the sequence is ERHSKTDMEDSPMIQER. Cystine bridges form between cysteine 46–cysteine 59 and cysteine 55–cysteine 64.

This sequence belongs to the neurotoxin 36 family. 02 subfamily. In terms of tissue distribution, expressed by the venom gland.

Its subcellular location is the secreted. Reversibly blocks N-type calcium channels (Cav2.2/CACNA1B) in rat dorsal root ganglion cells. Elicits no toxic symptoms in either vertebrates or invertebrates during a period of 48 hours post-injection, when it was assayed in vivo by direct injection into mice and cockroaches. This is Hainantoxin-X-3 from Cyriopagopus hainanus (Chinese bird spider).